Here is a 112-residue protein sequence, read N- to C-terminus: M-myrmeciitoxin-Mp1 (112 aa).

The N-terminal stretch at 1–26 (MKLSCLLLTLTIIFVLTIVHAPNVEA) is a signal peptide. A propeptide spanning residues 27-56 (KDLADPESEAVGFADAFGEADAVGEADPNA) is cleaved from the precursor. The segment at 57-78 (GLGSVFGRLARILGRVIPKVAK) is critical for cytotoxic activity. The segment at 93 to 106 (KEAIPMAVEMAKSQ) is igE-binding determinant.

It belongs to the formicidae venom precursor-01 superfamily. Ant pilosulin family. As to expression, expressed by the venom gland.

Its subcellular location is the secreted. In terms of biological role, has strong cytotoxic and hemolytic activities. Is more potent against mononuclear leukocytes than against granulocytes. The synthesized peptide 57-76 shows a potent and broad spectrum antimicrobial activity against both Gram-positive and Gram-negative bacteria, and also against the fungus C.albicans. Adopts an alpha-helical structure. This is M-myrmeciitoxin-Mp1 from Myrmecia pilosula (Jack jumper ant).